The primary structure comprises 249 residues: Ribosomal RNA small subunit methyltransferase J (249 aa).

S-adenosyl-L-methionine contacts are provided by residues 97-98 (RD), 113-114 (ER), and Asp167.

Belongs to the methyltransferase superfamily. RsmJ family.

The protein resides in the cytoplasm. The enzyme catalyses guanosine(1516) in 16S rRNA + S-adenosyl-L-methionine = N(2)-methylguanosine(1516) in 16S rRNA + S-adenosyl-L-homocysteine + H(+). In terms of biological role, specifically methylates the guanosine in position 1516 of 16S rRNA. The polypeptide is Ribosomal RNA small subunit methyltransferase J (Aeromonas salmonicida (strain A449)).